The sequence spans 364 residues: Histidinol-phosphate aminotransferase (364 aa).

K224 is subject to N6-(pyridoxal phosphate)lysine.

Belongs to the class-II pyridoxal-phosphate-dependent aminotransferase family. Histidinol-phosphate aminotransferase subfamily. In terms of assembly, homodimer. Requires pyridoxal 5'-phosphate as cofactor.

It carries out the reaction L-histidinol phosphate + 2-oxoglutarate = 3-(imidazol-4-yl)-2-oxopropyl phosphate + L-glutamate. It participates in amino-acid biosynthesis; L-histidine biosynthesis; L-histidine from 5-phospho-alpha-D-ribose 1-diphosphate: step 7/9. The polypeptide is Histidinol-phosphate aminotransferase (Anaeromyxobacter sp. (strain Fw109-5)).